A 202-amino-acid chain; its full sequence is Large ribosomal subunit protein bL17 (202 aa).

The disordered stretch occupies residues 148-202 (DEAPAAESTDAAQVEAGGVEQPDTLPDADAPATADEGVEVDAAEVDPSDEKKDQA). The segment covering 169–182 (PDTLPDADAPATAD) has biased composition (low complexity). Residues 183 to 194 (EGVEVDAAEVDP) are compositionally biased toward acidic residues.

The protein belongs to the bacterial ribosomal protein bL17 family. Part of the 50S ribosomal subunit. Contacts protein L32.

This Kineococcus radiotolerans (strain ATCC BAA-149 / DSM 14245 / SRS30216) protein is Large ribosomal subunit protein bL17.